The chain runs to 304 residues: Endonuclease III-like protein 1 (304 aa).

A mitochondrion-targeting transit peptide spans 1 to 22 (MTALSARMLTRSRSLGPGAGPR). A disordered region spans residues 1–72 (MTALSARMLT…SDSEKGEGAE (72 aa)). Basic and acidic residues predominate over residues 23 to 42 (GCREEPGPLRRREAAAEARK). A Bipartite nuclear localization signal motif is present at residues 28–52 (PGPLRRREAAAEARKSHSPVKRPRK). Residues 43-55 (SHSPVKRPRKAQR) show a composition bias toward basic residues. Phosphoserine occurs at positions 63 and 65. One can recognise a HhH domain in the interval 191 to 215 (HYGGDIPASVAELVALPGVGPKMAH). Lysine 212 (nucleophile; for N-glycosylase activity) is an active-site residue. Residues cysteine 282, cysteine 289, cysteine 292, and cysteine 298 each coordinate [4Fe-4S] cluster.

Belongs to the Nth/MutY family. Interacts with YBX1. Interacts with ERCC5/XPG; the interaction stimulates NTHL1 activity and NTHL1 binding to its DNA substrate. It depends on [4Fe-4S] cluster as a cofactor. Ubiquitinated by TRIM26; leading to proteasomal degradation. As to expression, widely expressed with highest levels in heart and lowest levels in lung and liver.

The protein localises to the nucleus. It is found in the mitochondrion. It catalyses the reaction 2'-deoxyribonucleotide-(2'-deoxyribose 5'-phosphate)-2'-deoxyribonucleotide-DNA = a 3'-end 2'-deoxyribonucleotide-(2,3-dehydro-2,3-deoxyribose 5'-phosphate)-DNA + a 5'-end 5'-phospho-2'-deoxyribonucleoside-DNA + H(+). APE1 displaces NTHL1 from the N-glycosylase-generated AP site in DNA, thereby increasing the turnover of the DNA N-glycosylase activity. AP lyase activity is stimulated by YBX1. ERCC5/XPG stimulates NTHL1 activity and NTHL1 binding to its DNA substrate. In terms of biological role, bifunctional DNA N-glycosylase with associated apurinic/apyrimidinic (AP) lyase function that catalyzes the first step in base excision repair (BER), the primary repair pathway for the repair of oxidative DNA damage. The DNA N-glycosylase activity releases the damaged DNA base from DNA by cleaving the N-glycosidic bond, leaving an AP site. The AP-lyase activity cleaves the phosphodiester bond 3' to the AP site by a beta-elimination. Primarily recognizes and repairs oxidative base damage of pyrimidines. Also has 8-oxo-7,8-dihydroguanine (8-oxoG) DNA glycosylase activity. Acts preferentially on DNA damage opposite guanine residues in DNA. Is able to process lesions in nucleosomes without requiring or inducing nucleosome disruption. The protein is Endonuclease III-like protein 1 of Homo sapiens (Human).